The primary structure comprises 503 residues: T-complex protein 11 homolog (503 aa).

Residues 1 to 22 (MPDVKESVPPKYPGDSEGRSCK) show a composition bias toward basic and acidic residues. Disordered regions lie at residues 1–42 (MPDV…PPPF) and 254–285 (DLTM…NPEP). Residues 263-285 (PDTSDSSSVAGPSPNEAANNPEP) are compositionally biased toward low complexity. Residues 330–349 (LTVMASVLLVASSFSGSVLF) traverse the membrane as a helical segment.

The protein belongs to the TCP11 family. In terms of assembly, found in a complex at least composed of MROH2B, PRKACA isoform 2 and TCP11. Interacts with MROH2B. Interacts with PRKACA isoform 2. Isoform 2 and isoform 3 interact with ODF1 (via leucine zipper motif). In terms of processing, constitutively phosphorylated on serine, threonine and tyrosine residues within the head and tail regions of noncapacitated spermatozoa. Phosphorylation on tyrosine residues increases upon sperm capacitation within the acrosomal region in a protein kinase A (PKA)-dependent signaling pathway. As to expression, isoform 2 and isoform 3 are expressed in sperm. Isoform 1 is not detected in sperm (at protein level). Testis-specific. Isoform 1, isoform 2 and isoform 3 are expressed in sperm.

It localises to the membrane. The protein resides in the cell projection. The protein localises to the cilium. Its subcellular location is the flagellum. It is found in the cytoplasmic vesicle. It localises to the secretory vesicle. The protein resides in the acrosome. Plays a role in the process of sperm capacitation and acrosome reactions. Probable receptor for the putative fertilization-promoting peptide (FPP) at the sperm membrane that may modulate the activity of the adenylyl cyclase cAMP pathway. The sequence is that of T-complex protein 11 homolog (TCP11) from Homo sapiens (Human).